The primary structure comprises 293 residues: DNA-directed RNA polymerase III subunit RPC6 (293 aa).

Belongs to the eukaryotic RPC34/RPC39 RNA polymerase subunit family. In terms of assembly, component of the RNA polymerase III (Pol III) complex consisting of 17 subunits.

The protein resides in the nucleus. Its function is as follows. DNA-dependent RNA polymerase catalyzes the transcription of DNA into RNA using the four ribonucleoside triphosphates as substrates. Specific peripheric component of RNA polymerase III which synthesizes small RNAs, such as 5S rRNA and tRNAs. This is DNA-directed RNA polymerase III subunit RPC6 from Drosophila melanogaster (Fruit fly).